We begin with the raw amino-acid sequence, 518 residues long: Probable inorganic carbon transporter subunit DabB (518 aa).

The next 13 helical transmembrane spans lie at 3-23 (MQWV…LGSL), 37-57 (ISLL…FEWV), 65-85 (WVGV…IAFV), 114-134 (CVVT…WIAI), 165-185 (AEAC…TWFI), 207-227 (MLLA…GWLI), 242-262 (AGII…IVLS), 264-284 (MAQW…ALVM), 302-322 (MGLM…LHLV), 358-378 (WWFA…LADL), 379-399 (SGPY…IAER), 403-423 (LTSS…VVYT), and 442-462 (WKGD…YFLL).

The protein belongs to the inorganic carbon transporter (TC 9.A.2) DabB family. Forms a complex with DabA.

It localises to the cell inner membrane. With respect to regulation, intracellular DIC accumulation is sensitive to CCCP (carbonyl cyanide-m-chlorophenylhydrazone) and DCCD (N,N-dicyclohexylcarbodiimide) and therefore likely driven by either proton gradient, ATP, or both. In terms of biological role, part of an energy-coupled inorganic carbon pump involved in transport of dissolved inorganic carbon (DIC) with downstream gene dabA (Tcr_0854); has been suggested to be a proton-DIC symporter. The polypeptide is Probable inorganic carbon transporter subunit DabB (Hydrogenovibrio crunogenus (strain DSM 25203 / XCL-2) (Thiomicrospira crunogena)).